We begin with the raw amino-acid sequence, 386 residues long: MLFLVVFLHLYRFTFGPQHPAAHGVLCCLLYFCGEFIVYIDCIIGYLHRGTEKLCEYKSVEQCLPYFDRLDYVSVCCNEHLLSLCFEYMLRCCLSLRCAFMRLLIVEFTRSFNGLLCISCMVLDLGCLSPLLWSFEERDKLMTFFDLCCGCRMHLAFMVLLGILDDFVFGFVDFLLLLIISCLFVMDCYDLLFVGNRLFYLRLRGLSFFDLYDLVFNSLSGVLSRSLGMVWDCRLFSCYELYFMFCYDYCFCFIGDAFDRLFLRLFDMRMSLLICKQCFFVGFFVFGFVCLFDYLYCDITIETIIMLFYSLWCCCLPGISFACVEHPKGEYCLLLCFCVGLCSRLRLRCADFLHICLLDVCLRGFLLHDLVAVLGNIDVVFGSVDR.

The protein belongs to the complex I 49 kDa subunit family.

The protein resides in the mitochondrion. It carries out the reaction a ubiquinone + NADH + 5 H(+)(in) = a ubiquinol + NAD(+) + 4 H(+)(out). Functionally, core subunit of the mitochondrial membrane respiratory chain NADH dehydrogenase (Complex I) that is believed to belong to the minimal assembly required for catalysis. Complex I functions in the transfer of electrons from NADH to the respiratory chain. The immediate electron acceptor for the enzyme is believed to be ubiquinone. Component of the iron-sulfur (IP) fragment of the enzyme. Component of the iron-sulfur (IP) fragment of the enzyme. This chain is NADH-ubiquinone oxidoreductase 49 kDa subunit homolog (NAD7), found in Trypanosoma brucei brucei.